A 154-amino-acid chain; its full sequence is 6,7-dimethyl-8-ribityllumazine synthase (154 aa).

5-amino-6-(D-ribitylamino)uracil-binding positions include Phe22, 56-58 (SFE), and 81-83 (VLI). 86–87 (ET) provides a ligand contact to (2S)-2-hydroxy-3-oxobutyl phosphate. The active-site Proton donor is the His89. Phe114 is a binding site for 5-amino-6-(D-ribitylamino)uracil. Arg128 serves as a coordination point for (2S)-2-hydroxy-3-oxobutyl phosphate.

The protein belongs to the DMRL synthase family.

The enzyme catalyses (2S)-2-hydroxy-3-oxobutyl phosphate + 5-amino-6-(D-ribitylamino)uracil = 6,7-dimethyl-8-(1-D-ribityl)lumazine + phosphate + 2 H2O + H(+). It participates in cofactor biosynthesis; riboflavin biosynthesis; riboflavin from 2-hydroxy-3-oxobutyl phosphate and 5-amino-6-(D-ribitylamino)uracil: step 1/2. Catalyzes the formation of 6,7-dimethyl-8-ribityllumazine by condensation of 5-amino-6-(D-ribitylamino)uracil with 3,4-dihydroxy-2-butanone 4-phosphate. This is the penultimate step in the biosynthesis of riboflavin. The sequence is that of 6,7-dimethyl-8-ribityllumazine synthase from Chlamydia caviae (strain ATCC VR-813 / DSM 19441 / 03DC25 / GPIC) (Chlamydophila caviae).